We begin with the raw amino-acid sequence, 130 residues long: Small ribosomal subunit protein uS8 (130 aa).

It belongs to the universal ribosomal protein uS8 family.

It localises to the cytoplasm. The polypeptide is Small ribosomal subunit protein uS8 (RPS15A) (Brassica napus (Rape)).